The following is a 409-amino-acid chain: Argininosuccinate synthase (409 aa).

ATP contacts are provided by residues 12–20 and A39; that span reads AYSGGLDTS. Residues Y90 and S95 each contribute to the L-citrulline site. An ATP-binding site is contributed by G120. Positions 122, 126, and 127 each coordinate L-aspartate. An L-citrulline-binding site is contributed by N126. Residues R130, S181, S190, E266, and Y278 each contribute to the L-citrulline site.

It belongs to the argininosuccinate synthase family. Type 1 subfamily. In terms of assembly, homotetramer.

The protein localises to the cytoplasm. The catalysed reaction is L-citrulline + L-aspartate + ATP = 2-(N(omega)-L-arginino)succinate + AMP + diphosphate + H(+). Its pathway is amino-acid biosynthesis; L-arginine biosynthesis; L-arginine from L-ornithine and carbamoyl phosphate: step 2/3. The polypeptide is Argininosuccinate synthase (Gluconacetobacter diazotrophicus (strain ATCC 49037 / DSM 5601 / CCUG 37298 / CIP 103539 / LMG 7603 / PAl5)).